Reading from the N-terminus, the 87-residue chain is Spore morphogenesis and germination protein YwcE (87 aa).

The next 3 helical transmembrane spans lie at 1–21, 26–46, and 56–76; these read MMDM…FIWL, VALS…FYAT, and LMII…FIIY.

It belongs to the YwcE family.

It is found in the cell membrane. It localises to the spore membrane. Its subcellular location is the spore outer membrane. Its function is as follows. Required for proper spore morphogenesis. Important for spore germination. This chain is Spore morphogenesis and germination protein YwcE (ywcE), found in Bacillus subtilis (strain 168).